Reading from the N-terminus, the 154-residue chain is Snaclec agglucetin subunit alpha-1 (154 aa).

An N-terminal signal peptide occupies residues M1–A23. Disulfide bonds link C27–C38, C55–C150, and C125–C142. In terms of domain architecture, C-type lectin spans Y34–K151. N116 is a glycosylation site (N-linked (GlcNAc...) asparagine).

The protein belongs to the snaclec family. Heterotetramer of the subunits alpha-1, alpha-2, beta-1 and beta-2; disulfide-linked. As to expression, expressed by the venom gland.

It is found in the secreted. Agglucetin specifically causes platelet aggregation and surface exposure of integrin alpha-IIb/beta-3 with a GPIb-(GP1BA-) dependent manner in washed platelets. It binds to human platelets in a saturable manner, and its binding is specifically blocked by anti-GP Ib mAb. It regulates endothelial cell survival and promotes angiogenesis by activating integrin alpha-v/beta-3 signaling through FAK/phosphatidylinositol 3-kinase (PI3K)/Akt pathway. In Deinagkistrodon acutus (Hundred-pace snake), this protein is Snaclec agglucetin subunit alpha-1.